A 199-amino-acid polypeptide reads, in one-letter code: uncharacterized protein (199 aa).

Residues 1 to 23 (MSARAPKELRLALPPCLLNRTFA) form the signal peptide. Residues Asn-19 and Asn-26 are each glycosylated (N-linked (GlcNAc...) asparagine). The Extracellular portion of the chain corresponds to 24 to 60 (SHNASGGSSAGLRSSGAGGGTCITQVGQQLFQSFSST). Residues 61 to 81 (LVLIVLVTLIFCLLVLSLSTF) form a helical membrane-spanning segment. Residues 82-199 (HIHKRRMKKR…EGLLQTVVLS (118 aa)) are Cytoplasmic-facing. The segment at 93-190 (MQRAQEEYER…ASSCLDTPGE (98 aa)) is disordered. 2 stretches are compositionally biased toward basic and acidic residues: residues 95–106 (RAQEEYERDHCS) and 124–135 (HGKETRLERQPR). Low complexity predominate over residues 147–163 (SSSSSSSSSPGLLCQGP). A compositionally biased stretch (pro residues) spans 164–176 (CAPPPPLPAPTPQ).

It localises to the membrane. This is an uncharacterized protein from Mus musculus (Mouse).